The chain runs to 199 residues: MSNMEKHLFNLKFAAKELNRNSKRCDKEEKAEKAKIKKAIQKGNMEVARIHAENAIRQKNQAINFLRMSARVDAVAARVQTAVTMGKVTKSMAGVVKSMDATLKSMNLEKISALMDKFEHQFETLDVQTQQMENTMSNTTTLTTPQNQVDMLLQEMADEAGLDLNMELPQGQTGSVGTSVASAEQDELSQRLARLRDQV.

2 coiled-coil regions span residues asparagine 10 to alanine 48 and threonine 178 to valine 199. The interval glutamate 167–valine 199 is disordered. Positions glutamine 170–serine 182 are enriched in polar residues. The short motif at aspartate 186–arginine 196 is the MIT-interacting motif element.

This sequence belongs to the SNF7 family. Probable peripherally associated component of the endosomal sorting required for transport complex III (ESCRT-III).

Its subcellular location is the cytoplasm. It localises to the cytosol. The protein resides in the endosome. It is found in the late endosome membrane. In terms of biological role, probable peripherally associated component of the endosomal sorting required for transport complex III (ESCRT-III) which is involved in multivesicular bodies (MVBs) formation and sorting of endosomal cargo proteins into MVBs. MVBs contain intraluminal vesicles (ILVs) that are generated by invagination and scission from the limiting membrane of the endosome and mostly are delivered to lysosomes enabling degradation of membrane proteins, such as stimulated growth factor receptors, lysosomal enzymes and lipids. The protein is Charged multivesicular body protein 1b (CHMP1B) of Gallus gallus (Chicken).